The sequence spans 261 residues: Triosephosphate isomerase (261 aa).

Substrate is bound at residue 10–12 (NWK). Catalysis depends on His-100, which acts as the Electrophile. Residue Glu-172 is the Proton acceptor of the active site. Substrate-binding positions include Gly-178, Ser-218, and 239–240 (GG).

It belongs to the triosephosphate isomerase family. Homodimer.

The protein resides in the cytoplasm. The enzyme catalyses D-glyceraldehyde 3-phosphate = dihydroxyacetone phosphate. Its pathway is carbohydrate biosynthesis; gluconeogenesis. It functions in the pathway carbohydrate degradation; glycolysis; D-glyceraldehyde 3-phosphate from glycerone phosphate: step 1/1. Functionally, involved in the gluconeogenesis. Catalyzes stereospecifically the conversion of dihydroxyacetone phosphate (DHAP) to D-glyceraldehyde-3-phosphate (G3P). The chain is Triosephosphate isomerase from Saccharopolyspora erythraea (strain ATCC 11635 / DSM 40517 / JCM 4748 / NBRC 13426 / NCIMB 8594 / NRRL 2338).